The primary structure comprises 466 residues: Probable Xaa-Pro aminopeptidase pepP (466 aa).

Residues D264, D275, E398, and E438 each contribute to the Mn(2+) site.

The protein belongs to the peptidase M24B family. Requires Mn(2+) as cofactor.

It carries out the reaction Release of any N-terminal amino acid, including proline, that is linked to proline, even from a dipeptide or tripeptide.. Catalyzes the removal of a penultimate prolyl residue from the N-termini of peptides. This is Probable Xaa-Pro aminopeptidase pepP (pepP) from Aspergillus niger (strain ATCC MYA-4892 / CBS 513.88 / FGSC A1513).